A 156-amino-acid chain; its full sequence is SsrA-binding protein (156 aa).

Belongs to the SmpB family.

It localises to the cytoplasm. Its function is as follows. Required for rescue of stalled ribosomes mediated by trans-translation. Binds to transfer-messenger RNA (tmRNA), required for stable association of tmRNA with ribosomes. tmRNA and SmpB together mimic tRNA shape, replacing the anticodon stem-loop with SmpB. tmRNA is encoded by the ssrA gene; the 2 termini fold to resemble tRNA(Ala) and it encodes a 'tag peptide', a short internal open reading frame. During trans-translation Ala-aminoacylated tmRNA acts like a tRNA, entering the A-site of stalled ribosomes, displacing the stalled mRNA. The ribosome then switches to translate the ORF on the tmRNA; the nascent peptide is terminated with the 'tag peptide' encoded by the tmRNA and targeted for degradation. The ribosome is freed to recommence translation, which seems to be the essential function of trans-translation. The sequence is that of SsrA-binding protein from Staphylococcus haemolyticus (strain JCSC1435).